Here is a 346-residue protein sequence, read N- to C-terminus: Dehydrogenase azaJ (346 aa).

Val-43–Gln-48 is a binding site for NADP(+). Residue Leu-133 to Val-140 participates in substrate binding. NADP(+) is bound by residues Ala-170–Val-173, Ser-193–Asn-196, Tyr-211, and Leu-251–Asn-252. Residue Ala-269–Val-273 coordinates substrate. Val-336–Ser-337 serves as a coordination point for NADP(+).

Belongs to the zinc-containing alcohol dehydrogenase family.

Its pathway is secondary metabolite biosynthesis. Its function is as follows. Dehydrogenase; part of the gene cluster that mediates the biosynthesis of azaphilones, a class of fungal metabolites characterized by a highly oxygenated pyrano-quinone bicyclic core and exhibiting a broad range of bioactivities. In the first step, the non-reducing polyketide synthase azaA forms the hexaketide precursor from successive condensations of five malonyl-CoA units, presumably with a simple acetyl-CoA starter unit. The reactive polyketide chain then undergoes a PT-mediated C2-C7 cyclization to afford the aromatic ring and is eventually released as an aldehyde through the R-domain. The putative ketoreductase azaE is proposed to catalyze the reduction of the terminal ketone resulting in the early culture product FK17-P2a. The monooxygenase azaH was demonstrated to be the only enzyme required to convert FK17-P2a to azanigerone E. AzaH first hydroxylates the benzaldehyde intermediate FK17-P2a at C4, which triggers the formation of the pyran-ring to afford azanigerone E. In parallel, the 2,4-dimethylhexanoyl chain is synthesized by the HR-PKS azaB and is proposed to be transferred to the C4-hydroxyl of azanigerone E by the acyltransferase azaD directly from the ACP domain of azaB. Alternatively, the 2,4-dimethyl-hexanoyl chain may be offloaded from the HR-PKS as a carboxylic acid and converted to an acyl-CoA by azaF. The resulting acyl-CoA molecule could then be taken up as a substrate by AzaD to form azanigerone B. To yield the carboxylic acid substituent in azanigerone A, the hydroxypropyl side chain of azanigerone B would need to undergo a C-C oxidative cleavage catalyzed by cytochrome P450 AzaI. AzaI is proposed to act on a vicinal diol that leads to a C-C bond scission either through an alkoxyradical intermediate or a peroxy complex. In the biosynthesis of azanigerone A, azanigerone B first undergoes hydroxylation at C10, possibly catalyzed by one of the two FAD-dependent monooxygenases encoded in the cluster, azaG or azaL, resulting in the vicinal diol azanigerone C. Oxidative cleavage of azanigerone C by azaI would yield the corresponding aldehyde derivative of azanigerone A. Finally, the dehydrogenase azaJ is proposed to convert the aldehyde functional group into the carboxylic acid, completing the conversion from azanigerone B to azanigerone A. Alternatively, the oxidation of aldehyde to carboxylic acid may be catalyzed by the same P450 enzyme azaI via consecutive oxidation or by endogenous alcohol dehydrogenase. In Aspergillus niger (strain ATCC 1015 / CBS 113.46 / FGSC A1144 / LSHB Ac4 / NCTC 3858a / NRRL 328 / USDA 3528.7), this protein is Dehydrogenase azaJ.